Here is a 295-residue protein sequence, read N- to C-terminus: MDNKLNIVIITGMSGAGKTVAIQSFEDMGYFTVDNMPPNLIEKFVGLLNTPDNKIDKVALVVDMRSRAFFEDIQSIVTELTDNTSVNFKLLFLDANDTELVSRYKETRRSHPLAIDGRTLDGITKEREILADLKNLSEVVIDTSELTPRNLRARILQKFATSTESTFRIEVMSFGFKYGLPLDADLVFDVRFLPNPHYISELRDKNGTDQEVYDYVMEHPQSEEFYQNLMKMLVPILPAYKKEGKSVLTIAFGCTGGQHRSVAFAERVSAALREKWHLNVSHRDKDRRKETVNRS.

Position 12-19 (glycine 12–threonine 19) interacts with ATP. Residue aspartate 63–serine 66 coordinates GTP.

This sequence belongs to the RapZ-like family.

Functionally, displays ATPase and GTPase activities. The polypeptide is Nucleotide-binding protein LACR_1047 (Lactococcus lactis subsp. cremoris (strain SK11)).